The primary structure comprises 107 residues: Large ribosomal subunit protein P1 (107 aa).

The segment covering Pro-67–Ser-82 has biased composition (low complexity). The segment at Pro-67 to Asp-107 is disordered. Over residues Gly-83 to Glu-92 the composition is skewed to basic and acidic residues.

Belongs to the eukaryotic ribosomal protein P1/P2 family. As to quaternary structure, P1 and P2 exist as dimers at the large ribosomal subunit.

Plays an important role in the elongation step of protein synthesis. The chain is Large ribosomal subunit protein P1 from Leishmania peruviana.